We begin with the raw amino-acid sequence, 98 residues long: NADH-ubiquinone oxidoreductase chain 4L (98 aa).

3 helical membrane-spanning segments follow: residues P2–F22, L30–G50, and I61–I81.

The protein belongs to the complex I subunit 4L family. As to quaternary structure, core subunit of respiratory chain NADH dehydrogenase (Complex I) which is composed of 45 different subunits.

Its subcellular location is the mitochondrion inner membrane. The enzyme catalyses a ubiquinone + NADH + 5 H(+)(in) = a ubiquinol + NAD(+) + 4 H(+)(out). Functionally, core subunit of the mitochondrial membrane respiratory chain NADH dehydrogenase (Complex I) which catalyzes electron transfer from NADH through the respiratory chain, using ubiquinone as an electron acceptor. Part of the enzyme membrane arm which is embedded in the lipid bilayer and involved in proton translocation. In Bradypus tridactylus (Pale-throated three-toed sloth), this protein is NADH-ubiquinone oxidoreductase chain 4L (MT-ND4L).